The chain runs to 543 residues: uncharacterized protein (543 aa).

One can recognise a TRAM domain in the interval 1–59; the sequence is MLKKNDIVEVEIVDLTHEGAGVAKVDGLVFFVENALPSEKILMRVLKVNKKIGFGKVEK. Residues glutamine 283, tyrosine 312, glutamate 333, and aspartate 381 each coordinate S-adenosyl-L-methionine. The active-site Nucleophile is the cysteine 408.

It belongs to the class I-like SAM-binding methyltransferase superfamily. RNA M5U methyltransferase family.

This is an uncharacterized protein from Streptococcus pneumoniae (strain ATCC BAA-255 / R6).